Reading from the N-terminus, the 500-residue chain is Ent-kaurene oxidase P450-4 (500 aa).

Residues 6 to 26 (VHWLIYVAFGAWLCSYVIHVL) traverse the membrane as a helical segment. A glycan (N-linked (GlcNAc...) asparagine) is linked at asparagine 240. Residue cysteine 441 participates in heme binding. Asparagine 475 is a glycosylation site (N-linked (GlcNAc...) asparagine).

Belongs to the cytochrome P450 family. It depends on heme as a cofactor.

Its subcellular location is the membrane. It carries out the reaction ent-kaur-16-ene + 3 reduced [NADPH--hemoprotein reductase] + 3 O2 = ent-kaur-16-en-19-oate + 3 oxidized [NADPH--hemoprotein reductase] + 4 H2O + 4 H(+). Its pathway is plant hormone biosynthesis; gibberellin biosynthesis. Ent-kaurene oxidase; part of the gene cluster that mediates the biosynthesis of gibberellins (GAs), diterpenoids that may provide a selective advantage during infection of the preferred host plant, rice. Gibberellins (GAs) are diterpenoids and are synthesized via the mevalonate pathway. Biosynthesis of the major metabolite GA3 (gibberellic acid) from geranylgeranyl diphosphate (GGPP) requires 13 steps. The GGPP produced by the geranylgeranyl diphosphate synthase GGS2 is converted to ent-kaurene via ent-copalyldiphosphate in a two-step cyclization reaction performed by the bifunctional ent-copalyl diphosphate synthase/ent-kaurene synthase enzyme (CPS/KS). Ent-Kaurene is metabolized to GAs by a series of oxidation reactions catalyzed by cytochrome P450 monooxygenases. Cytochrome P450 monooxygenase P450-4 is an ent-kaurene oxidase that catalyzes the three oxidation steps between ent-kaurene and ent-kaurenoic acid. The highly multifunctional cytochrome P450 monooxygenase P450-1 then catalyzes four steps involving oxidation at two carbon atoms, in the main pathway from ent-kaurenoic acid to GA14 via GA12-aldehyde as well as producing kaurenolides and fujenoic acids as by-products. The cytochrome P450 monooxygenase P450-2 then converts GA14 to GA4 by removal of C-20. GA4 is further converted to GA7 by the GA4 desaturase DES via 1,2-desaturation before cytochrome P450 monooxygenase P450-3, a 13-hydroxylase, hydroxylates GA7 to GA3, the final product of the GA-biosynthetic pathway. The sequence is that of Ent-kaurene oxidase P450-4 from Gibberella fujikuroi (strain CBS 195.34 / IMI 58289 / NRRL A-6831) (Bakanae and foot rot disease fungus).